We begin with the raw amino-acid sequence, 254 residues long: MASTSNRNFFSSNMTQIPMDEKIRIALQFNNLSQSTKQTLTKVYCALAIGILTATVGVLFSMFIYRPGFLMTLLLVIGSAILFATTPRTQDYKTQVKRFTLFNLVTFVTGMSSSGLIELYMDINSSIVLNAFMATCGIFISFTLFSLLTNKRLYIFIGSSLASLSIGIFVLALTRLFGGYSEPLDQLFILAILASSVLFIIFDTQIMVHRIENLGEKDVLFHAFILFYDFVDLFRVILKILAKKENKNNNKSRR.

At 1 to 43 (MASTSNRNFFSSNMTQIPMDEKIRIALQFNNLSQSTKQTLTKV) the chain is on the cytoplasmic side. A helical membrane pass occupies residues 44–64 (YCALAIGILTATVGVLFSMFI). Residues 65-66 (YR) lie on the Lumenal side of the membrane. The helical transmembrane segment at 67–87 (PGFLMTLLLVIGSAILFATTP) threads the bilayer. At 88 to 98 (RTQDYKTQVKR) the chain is on the cytoplasmic side. Residues 99–119 (FTLFNLVTFVTGMSSSGLIEL) traverse the membrane as a helical segment. Residues 120-126 (YMDINSS) lie on the Lumenal side of the membrane. A helical transmembrane segment spans residues 127–147 (IVLNAFMATCGIFISFTLFSL). At 148–152 (LTNKR) the chain is on the cytoplasmic side. A helical transmembrane segment spans residues 153–173 (LYIFIGSSLASLSIGIFVLAL). Residues 174–187 (TRLFGGYSEPLDQL) lie on the Lumenal side of the membrane. The helical transmembrane segment at 188 to 208 (FILAILASSVLFIIFDTQIMV) threads the bilayer. The Cytoplasmic portion of the chain corresponds to 209-217 (HRIENLGEK). The segment at residues 218–238 (DVLFHAFILFYDFVDLFRVIL) is an intramembrane region (helical). Over 239–254 (KILAKKENKNNNKSRR) the chain is Cytoplasmic.

It belongs to the BI1 family.

Its subcellular location is the endoplasmic reticulum membrane. This Dictyostelium discoideum (Social amoeba) protein is Bax inhibitor 1 homolog.